The primary structure comprises 284 residues: ATP synthase gamma chain (284 aa).

Belongs to the ATPase gamma chain family. F-type ATPases have 2 components, CF(1) - the catalytic core - and CF(0) - the membrane proton channel. CF(1) has five subunits: alpha(3), beta(3), gamma(1), delta(1), epsilon(1). CF(0) has three main subunits: a, b and c.

Its subcellular location is the cell membrane. In terms of biological role, produces ATP from ADP in the presence of a proton gradient across the membrane. The gamma chain is believed to be important in regulating ATPase activity and the flow of protons through the CF(0) complex. The chain is ATP synthase gamma chain from Bacillus licheniformis (strain ATCC 14580 / DSM 13 / JCM 2505 / CCUG 7422 / NBRC 12200 / NCIMB 9375 / NCTC 10341 / NRRL NRS-1264 / Gibson 46).